The chain runs to 544 residues: Serine/threonine-protein kinase PAK 1 (544 aa).

Residues 1–79 are disordered; that stretch reads MSNNGLDVQD…KERPEISLPS (79 aa). Ser-2 carries the post-translational modification N-acetylserine. Ser-21 bears the Phosphoserine; by PKB and autocatalysis mark. Ser-57 is subject to Phosphoserine; by autocatalysis. A compositionally biased stretch (basic and acidic residues) spans 68–79; it reads KEKERPEISLPS. Positions 70 to 140 are autoregulatory region; sequence KERPEISLPS…YNSKKTSNSQ (71 aa). The 14-residue stretch at 75–88 folds into the CRIB domain; that stretch reads ISLPSDFEHTIHVG. The GTPase-binding stretch occupies residues 75–105; the sequence is ISLPSDFEHTIHVGFDAVTGEFTGMPEQWAR. The residue at position 84 (Thr-84) is a Phosphothreonine; by OXSR1. Ser-115 bears the Phosphoserine mark. Phosphotyrosine occurs at positions 131 and 142. Phosphoserine; by autocatalysis occurs at positions 144 and 149. Over residues 150–166 the composition is skewed to polar residues; the sequence is AEDYNSSNTLNVKTVSE. The disordered stretch occupies residues 150-195; that stretch reads AEDYNSSNTLNVKTVSETPAVPPVSEDEDDDDDATPPPVIAPRPEH. Tyr-153 carries the phosphotyrosine; by JAK2 modification. Ser-174 is modified (phosphoserine). Positions 174–183 are enriched in acidic residues; that stretch reads SEDEDDDDDA. Thr-184 carries the post-translational modification Phosphothreonine. Ser-198 is subject to Phosphoserine; by autocatalysis. A Phosphotyrosine; by JAK2 modification is found at Tyr-200. The residue at position 203 (Ser-203) is a Phosphoserine; by autocatalysis. The interval 209–250 is disordered; sequence PVTPTRDVATSPISPTENNTTPPDALTRNTEKQKKKPKMSDE. 2 positions are modified to phosphothreonine: Thr-211 and Thr-218. Residues Ser-219 and Ser-222 each carry the phosphoserine modification. Residues 219 to 230 are compositionally biased toward polar residues; it reads SPISPTENNTTP. Residues Thr-224, Thr-228, and Thr-229 each carry the phosphothreonine modification. Residues 269-520 form the Protein kinase domain; sequence YTRFEKIGQG…AKELLQHQFL (252 aa). 275–283 provides a ligand contact to ATP; the sequence is IGQGASGTV. Tyr-284 is modified (phosphotyrosine; by JAK2). Lys-298 is a binding site for ATP. Asp-388 functions as the Proton acceptor in the catalytic mechanism. Phosphothreonine; by autocatalysis, BRSK2 and PDPK1 is present on Thr-422.

Belongs to the protein kinase superfamily. STE Ser/Thr protein kinase family. STE20 subfamily. Homodimer in its autoinhibited state. Active as monomer. Interacts with GIT1. Component of cytoplasmic complexes, which also contains PXN, ARHGEF7 and GIT1. Interacts with NISCH. Interacts with DVL1; mediates the formation of a DVL1, MUSK and PAK1 ternary complex involved in AChR clustering. Binds to the caspase-cleaved p110 isoform of CDC2L1 and CDC2L2, p110C, but not the full-length proteins. Interacts with ARHGEF7. Interacts with SCRIB. Interacts with PDPK1. Interacts (via kinase domain) with RAF1. Interacts with NCK1 and NCK2. Interacts with TBCB. Interacts with BRSK2. Interacts tightly with GTP-bound but not GDP-bound CDC42/P21 and RAC1. Interacts with SNAI1. Interacts with CIB1 (via N-terminal region); the interaction is direct, promotes PAK1 activity and occurs in a calcium-dependent manner. Interacts with INPP5K. Interacts with gamma-tubulin. Interacts with RHOU; the interaction promotes PAK1 activation. Mg(2+) is required as a cofactor. Post-translationally, autophosphorylated in trans, meaning that in a dimer, one kinase molecule phosphorylates the other one. Activated by autophosphorylation at Thr-422 in response to a conformation change, triggered by interaction with GTP-bound CDC42 or RAC1. Activated by phosphorylation at Thr-422 by PDPK1. Phosphorylated by JAK2 in response to PRL; this increases PAK1 kinase activity. Phosphorylated at Ser-21 by PKB/AKT; this reduces interaction with NCK1 and association with focal adhesion sites. Activated by phosphorylation at Thr-422 by BRSK2. Upon DNA damage, phosphorylated at Thr-211 and translocates to the nucleoplasm. Phosphorylated at tyrosine residues, which can be enhanced by NTN1. Expressed predominantly in the brain, with higher expression in neuronal groups associated with motor function, and at lower levels in the spleen.

It localises to the cytoplasm. Its subcellular location is the cell junction. It is found in the focal adhesion. The protein resides in the cell projection. The protein localises to the lamellipodium. It localises to the cell membrane. Its subcellular location is the ruffle membrane. It is found in the invadopodium. The protein resides in the nucleus. The protein localises to the nucleoplasm. It localises to the chromosome. Its subcellular location is the cytoskeleton. It is found in the microtubule organizing center. The protein resides in the centrosome. The enzyme catalyses L-seryl-[protein] + ATP = O-phospho-L-seryl-[protein] + ADP + H(+). It carries out the reaction L-threonyl-[protein] + ATP = O-phospho-L-threonyl-[protein] + ADP + H(+). With respect to regulation, phosphorylation of Thr-84 by OXSR1 inhibits activation. Activated by binding small G proteins. Binding of GTP-bound CDC42 or RAC1 to the autoregulatory region releases monomers from the autoinhibited dimer, and enables activation by phosphorylation of Thr-422. Its function is as follows. Protein kinase involved in intracellular signaling pathways downstream of integrins and receptor-type kinases that plays an important role in cytoskeleton dynamics, in cell adhesion, migration, proliferation, apoptosis, mitosis, and in vesicle-mediated transport processes. Can directly phosphorylate BAD and protects cells against apoptosis. Activated by interaction with CDC42 and RAC1. Functions as a GTPase effector that links the Rho-related GTPases CDC42 and RAC1 to the JNK MAP kinase pathway. Phosphorylates and activates MAP2K1, and thereby mediates activation of downstream MAP kinases. Involved in the reorganization of the actin cytoskeleton, actin stress fibers and of focal adhesion complexes. Phosphorylates the tubulin chaperone TBCB and thereby plays a role in the regulation of microtubule biogenesis and organization of the tubulin cytoskeleton. Plays a role in the regulation of insulin secretion in response to elevated glucose levels. Part of a ternary complex that contains PAK1, DVL1 and MUSK that is important for MUSK-dependent regulation of AChR clustering during the formation of the neuromuscular junction (NMJ). Activity is inhibited in cells undergoing apoptosis, potentially due to binding of CDC2L1 and CDC2L2. Phosphorylates MYL9/MLC2. Phosphorylates RAF1 at 'Ser-338' and 'Ser-339' resulting in: activation of RAF1, stimulation of RAF1 translocation to mitochondria, phosphorylation of BAD by RAF1, and RAF1 binding to BCL2. Phosphorylates SNAI1 at 'Ser-246' promoting its transcriptional repressor activity by increasing its accumulation in the nucleus. In podocytes, promotes NR3C2 nuclear localization. Required for atypical chemokine receptor ACKR2-induced phosphorylation of LIMK1 and cofilin (CFL1) and for the up-regulation of ACKR2 from endosomal compartment to cell membrane, increasing its efficiency in chemokine uptake and degradation. In synapses, seems to mediate the regulation of F-actin cluster formation performed by SHANK3, maybe through CFL1 phosphorylation and inactivation. Plays a role in RUFY3-mediated facilitating gastric cancer cells migration and invasion. In response to DNA damage, phosphorylates MORC2 which activates its ATPase activity and facilitates chromatin remodeling. In neurons, plays a crucial role in regulating GABA(A) receptor synaptic stability and hence GABAergic inhibitory synaptic transmission through its role in F-actin stabilization. In hippocampal neurons, necessary for the formation of dendritic spines and excitatory synapses; this function is dependent on kinase activity and may be exerted by the regulation of actomyosin contractility through the phosphorylation of myosin II regulatory light chain (MLC). Along with GIT1, positively regulates microtubule nucleation during interphase. Phosphorylates FXR1, promoting its localization to stress granules and activity. Phosphorylates ILK on 'Thr-173' and 'Ser-246', promoting nuclear export of ILK. The chain is Serine/threonine-protein kinase PAK 1 from Rattus norvegicus (Rat).